A 206-amino-acid polypeptide reads, in one-letter code: Transmembrane emp24 domain-containing protein bai (206 aa).

The signal sequence occupies residues 1–20; the sequence is MLKSLLCILLIFGCLCRIHG. Topologically, residues 21 to 172 are lumenal; sequence VMFHLTPNTQ…RDTNEKTNSR (152 aa). In terms of domain architecture, GOLD spans 30–140; sequence QKCLKEDIQA…LKPLEVDLKR (111 aa). A helical membrane pass occupies residues 173–193; sequence VLFFSIFSMCCLLGLATWQVL. The Cytoplasmic portion of the chain corresponds to 194-206; it reads YLRRYFKAKKLIE.

The protein belongs to the EMP24/GP25L family.

The protein resides in the membrane. In terms of biological role, eca and bai are essential, though not redundant, for dorsoventral patterning of the embryo. Specifically required during early embryogenesis for the activity of maternal tkv, while the zygotic tkv is not affected. This is Transmembrane emp24 domain-containing protein bai from Drosophila grimshawi (Hawaiian fruit fly).